We begin with the raw amino-acid sequence, 246 residues long: MMKSQVASLLGLTLAILFFSGAHAAKITFTNNCPNTVWPGTLTGDQKPQLSLTGFELASKASRSVDAPSPWSGRFWGRTRCSTDAAGKFTCETADCGSGQVACNGAGAVPPATLVEITIAANGGQDYYDVSLVDGFNLPMSVAPQGGTGECKPSSCPANVNKVCPAPLQVKAADGSVISCKSACLAFGDSKYCCTPPNNTPETCPPTEYSEIFEKQCPQAYSYAYDDKNSTFTCSGGPDYVITFCP.

An N-terminal signal peptide occupies residues 1-24 (MMKSQVASLLGLTLAILFFSGAHA). Cystine bridges form between Cys-33-Cys-245, Cys-81-Cys-91, Cys-96-Cys-103, Cys-151-Cys-234, Cys-156-Cys-217, Cys-164-Cys-180, Cys-184-Cys-193, and Cys-194-Cys-204.

Belongs to the thaumatin family.

The protein resides in the secreted. In Malus domestica (Apple), this protein is Thaumatin-like protein 1a (TL1).